The primary structure comprises 1107 residues: Enolase-phosphatase E1 (1107 aa).

Mg(2+) contacts are provided by aspartate 19 and glutamate 21. Residues 152-153 and lysine 186 each bind substrate; that span reads SS. A Mg(2+)-binding site is contributed by aspartate 211. The segment at 258–1107 is disordered; it reads SVKSTETENG…SATPSVETES (850 aa). Positions 260-289 are enriched in basic and acidic residues; that stretch reads KSTETENGAEKETVTESTEKVADESEKETE. The segment covering 291-306 has biased composition (low complexity); it reads ETAAAETENGAEAENG. A compositionally biased stretch (acidic residues) spans 366-376; the sequence is DAMDVDAEMTD. Basic and acidic residues-rich tracts occupy residues 393–427 and 435–462; these read VTEKTETEESPKEKETEMEAEAEVSKTDEKEDTKQ and GEDKKGDVINKNAEDDIKVEEEKNKEEE. Over residues 475 to 485 the composition is skewed to acidic residues; it reads DKMDVDEEDSA. Composition is skewed to basic and acidic residues over residues 486-512, 534-548, 572-586, 593-604, 610-686, and 693-776; these read VIEKKADNVDEKPVESTTDEVAKKEEN, DETKEAPSDAAKEES, TVEKSSAEKTESKSE, TSEKKVEDKSAN, KEPK…EVKA, and DESK…KSVD. Positions 794–803 are enriched in low complexity; that stretch reads EETSATTEAQ. Composition is skewed to basic and acidic residues over residues 804 to 838 and 849 to 908; these read ATKEDEKPVDTKTNENDKTTPEVKATEEKTDDAKS and KEMK…ETKG. Residues 909–919 are compositionally biased toward low complexity; that stretch reads VEATTAGPVEE. Over residues 920 to 935 the composition is skewed to acidic residues; that stretch reads VAVEATEEDVAMEAES. 3 stretches are compositionally biased toward basic and acidic residues: residues 937–957, 1001–1028, and 1035–1047; these read DAVKEETKTEEPKSKVDKLDS, DEVKENGTSEKVNTKEESRVPENGEADS, and NHDEKADSDKEND. Over residues 1048 to 1083 the composition is skewed to low complexity; the sequence is TSASNIEEASSATTTTTNGTSTESDSSSTTPSSETV.

Belongs to the HAD-like hydrolase superfamily. MasA/MtnC family. In terms of assembly, monomer. The cofactor is Mg(2+).

The protein resides in the cytoplasm. It localises to the nucleus. The catalysed reaction is 5-methylsulfanyl-2,3-dioxopentyl phosphate + H2O = 1,2-dihydroxy-5-(methylsulfanyl)pent-1-en-3-one + phosphate. It functions in the pathway amino-acid biosynthesis; L-methionine biosynthesis via salvage pathway; L-methionine from S-methyl-5-thio-alpha-D-ribose 1-phosphate: step 3/6. Its pathway is amino-acid biosynthesis; L-methionine biosynthesis via salvage pathway; L-methionine from S-methyl-5-thio-alpha-D-ribose 1-phosphate: step 4/6. Bifunctional enzyme that catalyzes the enolization of 2,3-diketo-5-methylthiopentyl-1-phosphate (DK-MTP-1-P) into the intermediate 2-hydroxy-3-keto-5-methylthiopentenyl-1-phosphate (HK-MTPenyl-1-P), which is then dephosphorylated to form the acireductone 1,2-dihydroxy-3-keto-5-methylthiopentene (DHK-MTPene). The protein is Enolase-phosphatase E1 of Aedes aegypti (Yellowfever mosquito).